The chain runs to 156 residues: Endoribonuclease YbeY (156 aa).

Zn(2+) contacts are provided by H115, H119, and H125.

Belongs to the endoribonuclease YbeY family. Requires Zn(2+) as cofactor.

The protein resides in the cytoplasm. Functionally, single strand-specific metallo-endoribonuclease involved in late-stage 70S ribosome quality control and in maturation of the 3' terminus of the 16S rRNA. This Actinobacillus succinogenes (strain ATCC 55618 / DSM 22257 / CCUG 43843 / 130Z) protein is Endoribonuclease YbeY.